The primary structure comprises 274 residues: NH(3)-dependent NAD(+) synthetase (274 aa).

46–53 is a binding site for ATP; that stretch reads GISGGQDS. D52 contacts Mg(2+). Position 140 (R140) interacts with deamido-NAD(+). T160 is a binding site for ATP. Mg(2+) is bound at residue E165. 2 residues coordinate deamido-NAD(+): K173 and D180. Residues K189 and T211 each coordinate ATP. Position 260–261 (260–261) interacts with deamido-NAD(+); the sequence is HK.

This sequence belongs to the NAD synthetase family. In terms of assembly, homodimer.

The enzyme catalyses deamido-NAD(+) + NH4(+) + ATP = AMP + diphosphate + NAD(+) + H(+). It functions in the pathway cofactor biosynthesis; NAD(+) biosynthesis; NAD(+) from deamido-NAD(+) (ammonia route): step 1/1. Catalyzes the ATP-dependent amidation of deamido-NAD to form NAD. Uses ammonia as a nitrogen source. The protein is NH(3)-dependent NAD(+) synthetase of Streptococcus pneumoniae (strain Hungary19A-6).